The sequence spans 305 residues: Popeye domain-containing protein 3 (305 aa).

An N-linked (GlcNAc...) asparagine glycan is attached at asparagine 4. The next 3 membrane-spanning stretches (helical) occupy residues 34–54 (SILF…LYVF), 55–75 (SLLG…VCAA), and 77–99 (IFSW…TYQV). The interval 273–305 (PETPPVPPPRRLQRRSSGRPRPGVPNCSSPRKQ) is disordered. Asparagine 298 carries N-linked (GlcNAc...) asparagine glycosylation.

Belongs to the popeye family. In terms of tissue distribution, expressed first preferentially in atrium and later also in the subepicardial compact layer of the ventricles.

The protein localises to the membrane. May play a role in the maintenance of heart function mediated, at least in part, through cAMP-binding. May play a role in the regulation of KCNK2-mediated current amplitude. The sequence is that of Popeye domain-containing protein 3 (POPDC3) from Gallus gallus (Chicken).